Reading from the N-terminus, the 437-residue chain is Trypacidin cluster transcriptional coactivator tpcD (437 aa).

In terms of domain architecture, HTH iclR-type spans 75–144 (LAVQSQLLSC…PQRGHVAHSP (70 aa)). Residues 105-124 (IADLARLSGVPEAQLARIIR) constitute a DNA-binding region (H-T-H motif).

In terms of tissue distribution, specifically expressed in conidia.

The protein resides in the nucleus. Functionally, transcriptional coactivator; part of the gene cluster that mediates the biosynthesis of trypacidin, a mycotoxin with antiprotozoal activity and that plays a role in the infection process. With tpcE, coregulates the production of trypacidin. This chain is Trypacidin cluster transcriptional coactivator tpcD, found in Aspergillus fumigatus (strain ATCC MYA-4609 / CBS 101355 / FGSC A1100 / Af293) (Neosartorya fumigata).